A 472-amino-acid polypeptide reads, in one-letter code: Glutamate--tRNA ligase (472 aa).

The 'HIGH' region motif lies at 9-19; it reads PSPTGYLHVGG. Positions 98, 100, 125, and 127 each coordinate Zn(2+). The 'KMSKS' region motif lies at 237–241; the sequence is KLSKR. Lysine 240 lines the ATP pocket.

This sequence belongs to the class-I aminoacyl-tRNA synthetase family. Glutamate--tRNA ligase type 1 subfamily. As to quaternary structure, monomer. The cofactor is Zn(2+).

It localises to the cytoplasm. It carries out the reaction tRNA(Glu) + L-glutamate + ATP = L-glutamyl-tRNA(Glu) + AMP + diphosphate. Functionally, catalyzes the attachment of glutamate to tRNA(Glu) in a two-step reaction: glutamate is first activated by ATP to form Glu-AMP and then transferred to the acceptor end of tRNA(Glu). This Klebsiella pneumoniae (strain 342) protein is Glutamate--tRNA ligase.